A 419-amino-acid chain; its full sequence is L-rhamnose isomerase (419 aa).

Mn(2+)-binding residues include H262, D294, and D296.

Belongs to the rhamnose isomerase family. In terms of assembly, homotetramer. Requires Mn(2+) as cofactor.

Its subcellular location is the cytoplasm. The catalysed reaction is L-rhamnopyranose = L-rhamnulose. Its pathway is carbohydrate degradation; L-rhamnose degradation; glycerone phosphate from L-rhamnose: step 1/3. In terms of biological role, catalyzes the interconversion of L-rhamnose and L-rhamnulose. This Escherichia coli O139:H28 (strain E24377A / ETEC) protein is L-rhamnose isomerase.